The sequence spans 218 residues: MNSKIIRFENLRSFFKDGMTIMIGGFLNCGTPTKLIDFLVNLNIKNLTIISNDTCYPNTGIGKLISNNQVKKLIASYIGSNPDTGKKLFNNELEVELSPQGTLVERIRAGGSGLGGVLTKTGLGTLIEKGKKKISINGTEYLLELPLTADVALIKGSIVDEAGNTFYKGTTKNFNPYMAMAAKTVIVEAENLVSCEKLEKEKAMTPGVLINYIVKEPA.

CoA is bound at residue 24-30 (GGFLNCG).

It belongs to the 3-oxoacid CoA-transferase subunit A family. As to quaternary structure, heterotetramer composed of two alpha subunits (CtfA) and two beta subunits (CtfB).

The enzyme catalyses acetoacetate + butanoyl-CoA = acetoacetyl-CoA + butanoate. It carries out the reaction acetoacetate + acetyl-CoA = acetoacetyl-CoA + acetate. With respect to regulation, the acetate and butyrate conversion reactions are inhibited in vitro by physiological levels of acetone and butanol. Catalyzes the transfer of CoA from acetoacetyl-CoA to acetate, butyrate and propionate. Also shows low activity with valerate, isobutyrate and crotonate. Plays an important role in the metabolic shift between the acid-producing and solvent-forming states of C.acetobutylicum. Acts mainly to detoxify the medium by removing the acetate and butyrate excreted earlier in the fermentation. The polypeptide is Acetoacetyl-CoA:acetate/butyrate CoA transferase alpha subunit (Clostridium acetobutylicum (strain ATCC 824 / DSM 792 / JCM 1419 / IAM 19013 / LMG 5710 / NBRC 13948 / NRRL B-527 / VKM B-1787 / 2291 / W)).